The following is a 336-amino-acid chain: Cell division protein ZipA (336 aa).

Over 1 to 6 the chain is Periplasmic; it reads MMQDLR. Residues 7-27 form a helical membrane-spanning segment; the sequence is LILIVVGAIAIIALLLHGLWT. The Cytoplasmic segment spans residues 28-336; sequence SRKERSSLFR…RIRDVLKANA (309 aa). Residues 40-51 are compositionally biased toward basic and acidic residues; sequence PVKRAKKARDET. Positions 40 to 190 are disordered; sequence PVKRAKKARD…APAQPQQPAE (151 aa). The span at 76–89 shows a compositional bias: low complexity; sequence SFSSSSFDNASFDN. The segment covering 126–138 has biased composition (polar residues); the sequence is PRSQVRGDSNPQV. A compositionally biased stretch (low complexity) spans 179 to 190; it reads QPAPAQPQQPAE.

Belongs to the ZipA family. As to quaternary structure, interacts with FtsZ via their C-terminal domains.

The protein resides in the cell inner membrane. In terms of biological role, essential cell division protein that stabilizes the FtsZ protofilaments by cross-linking them and that serves as a cytoplasmic membrane anchor for the Z ring. Also required for the recruitment to the septal ring of downstream cell division proteins. This Pectobacterium carotovorum subsp. carotovorum (strain PC1) protein is Cell division protein ZipA.